The primary structure comprises 520 residues: MDRKAGEDDWEDSGAETGGSDYSRLSSTSSELSVDDTQDPFLVSIHVITDPGESRCLQEAIDRLLAWIHPDLQLFRVSERRVSKKRKPVKSFVSHPALAIILFLQEAYGEDQILHLHKCFQKPPWQFHHTERVHGKFLPYMPCNQDFFTLANGTPLWAIRQVHYGKEIIRFTIYCSYENFADMMKMYELILKKRVWRKKTDFCVFPVYSNMDFDIEFSLKRLAKGQKPVPLESSLLEFRVRDFGQLIPLLPNQCSPISEGRWKTEDHDGNKILLQQAQCLARKTTWKHQNYLSRNPAMTQPLSIAPRNRKFKSGKHKGRAGNGQVQHFGGSQMDFPRGQTDTLRSLKVPSESVQPFQRSKSLYCLPTTSDFPSCDSFPISETHLCFGQETYETPVWRSSPRINIDDLEGVEETDVDTGMKLSSSDLSVISAYSPLNGLCSDLEASLPSHGALSHSNTLPYDSLHSLSHISSSSCSVFPSATGASTLTQAHILGHYHQSSETTSHLSETLNVQEEEEEFYI.

2 disordered regions span residues 1–34 (MDRK…ELSV) and 311–334 (FKSG…SQMD). Over residues 20-32 (SDYSRLSSTSSEL) the composition is skewed to low complexity.

This sequence belongs to the FAM124 family.

In Xenopus laevis (African clawed frog), this protein is Protein FAM124A (fam124a).